The following is a 194-amino-acid chain: MSEKPTSIKLVVVGDGAVGKTCLLISYSIRKFPEDYIPTVFDNYVVSLTAGTRQIQLALWDTAGQEEYDQLRPLSYSSASIFLICFSVTSSVSYDNVITKWHPEVIHFAPKVPIILVGTKLDTRNDPAIVKRLTEQGMTVINTAKGEELKNRIKAVKYIECSAKTSENLKTVFDEAVKTVLMNKPQQRSKCALL.

The GTP site is built by A17, G19, K20, T21, C22, E34, Y36, T39, G64, K120, D122, A163, and K164. Position 21 (T21) interacts with Mg(2+). 2 short sequence motifs (switch) span residues 30-41 and 61-79; these read RKFPEDYIPTVF and DTAG…YSSA. T39 provides a ligand contact to Mg(2+). The residue at position 191 (C191) is a Cysteine methyl ester. C191 carries S-geranylgeranyl cysteine lipidation. The propeptide at 192–194 is removed in mature form; that stretch reads ALL.

This sequence belongs to the small GTPase superfamily. Rho family. In terms of assembly, interacts (GTP-bound form) with PAK4 (via CRIB domain). Interacts (GTP-bound form) with PAK5 (via CRIB domain). The cofactor is Mg(2+).

The protein localises to the cell membrane. Its subcellular location is the cytoplasm. It is found in the cytoskeleton. The catalysed reaction is GTP + H2O = GDP + phosphate + H(+). Its activity is regulated as follows. Regulated by guanine nucleotide exchange factors (GEFs) which promote the exchange of bound GDP for free GTP, GTPase activating proteins (GAPs) which increase the GTP hydrolysis activity, and GDP dissociation inhibitors which inhibit the dissociation of the nucleotide from the GTPase. Its function is as follows. Small GTPase which cycles between active GTP-bound and inactive GDP-bound states. The protein is Rho-related protein racC of Entamoeba histolytica (strain ATCC 30459 / HM-1:IMSS / ABRM).